The chain runs to 668 residues: DNA ligase (668 aa).

Residues 34 to 38 (DAEYD), 83 to 84 (SL), and E113 each bind NAD(+). Catalysis depends on K115, which acts as the N6-AMP-lysine intermediate. NAD(+) is bound by residues R136, E170, K286, and K310. Positions 404, 407, 422, and 427 each coordinate Zn(2+). The BRCT domain maps to 590-668 (ESDSYFAGKT…EVKMLEELKK (79 aa)).

It belongs to the NAD-dependent DNA ligase family. LigA subfamily. Requires Mg(2+) as cofactor. Mn(2+) is required as a cofactor.

The enzyme catalyses NAD(+) + (deoxyribonucleotide)n-3'-hydroxyl + 5'-phospho-(deoxyribonucleotide)m = (deoxyribonucleotide)n+m + AMP + beta-nicotinamide D-nucleotide.. Functionally, DNA ligase that catalyzes the formation of phosphodiester linkages between 5'-phosphoryl and 3'-hydroxyl groups in double-stranded DNA using NAD as a coenzyme and as the energy source for the reaction. It is essential for DNA replication and repair of damaged DNA. The polypeptide is DNA ligase (Bacillus pumilus (strain SAFR-032)).